We begin with the raw amino-acid sequence, 324 residues long: Glyoxylate/hydroxypyruvate reductase B (324 aa).

Catalysis depends on residues arginine 237 and glutamate 266. Histidine 285 (proton donor) is an active-site residue.

This sequence belongs to the D-isomer specific 2-hydroxyacid dehydrogenase family. GhrB subfamily. In terms of assembly, homodimer.

It is found in the cytoplasm. It carries out the reaction glycolate + NADP(+) = glyoxylate + NADPH + H(+). It catalyses the reaction (R)-glycerate + NAD(+) = 3-hydroxypyruvate + NADH + H(+). The enzyme catalyses (R)-glycerate + NADP(+) = 3-hydroxypyruvate + NADPH + H(+). In terms of biological role, catalyzes the NADPH-dependent reduction of glyoxylate and hydroxypyruvate into glycolate and glycerate, respectively. The protein is Glyoxylate/hydroxypyruvate reductase B of Escherichia coli O6:K15:H31 (strain 536 / UPEC).